The following is a 148-amino-acid chain: Flagellar assembly factor FliW (148 aa).

The protein belongs to the FliW family. As to quaternary structure, interacts with translational regulator CsrA and flagellin(s).

The protein resides in the cytoplasm. Its function is as follows. Acts as an anti-CsrA protein, binds CsrA and prevents it from repressing translation of its target genes, one of which is flagellin. Binds to flagellin and participates in the assembly of the flagellum. This chain is Flagellar assembly factor FliW, found in Ruminiclostridium cellulolyticum (strain ATCC 35319 / DSM 5812 / JCM 6584 / H10) (Clostridium cellulolyticum).